The primary structure comprises 663 residues: Methionine--tRNA ligase (663 aa).

A 'HIGH' region motif is present at residues 13-23 (PYTNGPCHLGH). Residues cysteine 144, cysteine 147, cysteine 156, and cysteine 160 each contribute to the Zn(2+) site. A 'KMSKS' region motif is present at residues 326–330 (KFSKS). Lysine 329 provides a ligand contact to ATP. One can recognise a tRNA-binding domain in the interval 565–663 (EFGKMKLIVG…QAVEPGTPIR (99 aa)).

The protein belongs to the class-I aminoacyl-tRNA synthetase family. MetG type 1 subfamily. In terms of assembly, homodimer. Zn(2+) is required as a cofactor.

It localises to the cytoplasm. It carries out the reaction tRNA(Met) + L-methionine + ATP = L-methionyl-tRNA(Met) + AMP + diphosphate. In terms of biological role, is required not only for elongation of protein synthesis but also for the initiation of all mRNA translation through initiator tRNA(fMet) aminoacylation. The sequence is that of Methionine--tRNA ligase from Methanosphaerula palustris (strain ATCC BAA-1556 / DSM 19958 / E1-9c).